A 141-amino-acid polypeptide reads, in one-letter code: Large ribosomal subunit protein uL11 (141 aa).

Belongs to the universal ribosomal protein uL11 family. As to quaternary structure, part of the ribosomal stalk of the 50S ribosomal subunit. Interacts with L10 and the large rRNA to form the base of the stalk. L10 forms an elongated spine to which L12 dimers bind in a sequential fashion forming a multimeric L10(L12)X complex. One or more lysine residues are methylated.

In terms of biological role, forms part of the ribosomal stalk which helps the ribosome interact with GTP-bound translation factors. This chain is Large ribosomal subunit protein uL11, found in Thermotoga neapolitana (strain ATCC 49049 / DSM 4359 / NBRC 107923 / NS-E).